Consider the following 148-residue polypeptide: Nickel and cobalt resistance protein CnrR (148 aa).

The N-terminal stretch at methionine 1–alanine 26 is a signal peptide. Topologically, residues leucine 28–glutamine 148 are periplasmic. A coiled-coil region spans residues asparagine 54–leucine 117.

It to A.xylosoxydans NccX.

It localises to the periplasm. CnrH alone is able to activate cnr expression, while both CnrY and CrnR (CnrX) are needed for nickel induction of CnrH. Has been suggested to bind nickel. This Cupriavidus metallidurans (strain ATCC 43123 / DSM 2839 / NBRC 102507 / CH34) (Ralstonia metallidurans) protein is Nickel and cobalt resistance protein CnrR (cnrR).